A 119-amino-acid polypeptide reads, in one-letter code: Protein Wnt-4 (119 aa).

Residue S1 is the site of O-palmitoleoyl serine; by PORCN attachment. Intrachain disulfides connect C69/C100 and C85/C95. N-linked (GlcNAc...) asparagine glycosylation occurs at N86.

Belongs to the Wnt family. In terms of processing, palmitoleoylation is required for efficient binding to frizzled receptors. Depalmitoleoylation leads to Wnt signaling pathway inhibition.

The protein resides in the secreted. It localises to the extracellular space. It is found in the extracellular matrix. Functionally, ligand for members of the frizzled family of seven transmembrane receptors. Plays an important role in embryonic development. In Eptatretus stoutii (Pacific hagfish), this protein is Protein Wnt-4 (WNT-4).